A 345-amino-acid chain; its full sequence is D-fructose 1,6-bisphosphatase class 2/sedoheptulose 1,7-bisphosphatase (345 aa).

Residues Asp33, Glu57, Asp97, and Glu100 each contribute to the Mn(2+) site. Residues 100–102 (EGT), Tyr131, 176–178 (RPR), and 198–200 (DGD) each bind substrate. Residue Glu225 participates in Mn(2+) binding.

It belongs to the FBPase class 2 family. As to quaternary structure, homotetramer. It depends on Mn(2+) as a cofactor.

It carries out the reaction beta-D-fructose 1,6-bisphosphate + H2O = beta-D-fructose 6-phosphate + phosphate. The catalysed reaction is D-sedoheptulose 1,7-bisphosphate + H2O = D-sedoheptulose 7-phosphate + phosphate. Its pathway is carbohydrate biosynthesis; Calvin cycle. Catalyzes the hydrolysis of fructose 1,6-bisphosphate (Fru 1,6-P2) and sedoheptulose 1,7-bisphosphate (Sed 1,7-P2) to fructose 6-phosphate and sedoheptulose 7-phosphate, respectively. In Microcystis aeruginosa (strain NIES-843 / IAM M-2473), this protein is D-fructose 1,6-bisphosphatase class 2/sedoheptulose 1,7-bisphosphatase.